Reading from the N-terminus, the 440-residue chain is Cytochrome P450 monooygenase 1 (440 aa).

Position 381 (Cys-381) interacts with heme.

It belongs to the cytochrome P450 family. The cofactor is heme.

The protein operates within plant hormone biosynthesis; gibberellin biosynthesis. In terms of biological role, GA14 synthase; part of the gene cluster that mediates the biosynthesis of gibberellins (GAs), diterpenoids that may provide a selective advantage during infection of the preferred host plant, rice. Gibberellins (GAs) are diterpenoids and are synthesized via the mevalonate pathway. Biosynthesis of the major metabolite GA3 (gibberellic acid) from geranylgeranyl diphosphate (GGPP) requires 13 steps. The GGPP produced by the geranylgeranyl diphosphate synthase GGS2 is converted to ent-kaurene via ent-copalyldiphosphate in a two-step cyclization reaction performed by the bifunctional ent-copalyl diphosphate synthase/ent-kaurene synthase enzyme (CPS/KS). Ent-Kaurene is metabolized to GAs by a series of oxidation reactions catalyzed by cytochrome P450 monooxygenases. Cytochrome P450 monooxygenase P450-4 is an ent-kaurene oxidase that catalyzes the three oxidation steps between ent-kaurene and ent-kaurenoic acid. The highly multifunctional cytochrome P450 monooxygenase P450-1 then catalyzes four steps involving oxidation at two carbon atoms, in the main pathway from ent-kaurenoic acid to GA14 via GA12-aldehyde as well as producing kaurenolides and fujenoic acids as by-products. The cytochrome P450 monooxygenase P450-2 then converts GA14 to GA4 by removal of C-20. GA4 is further converted to GA7 by the GA4 desaturase DES via 1,2-desaturation before cytochrome P450 monooxygenase P450-3, a 13-hydroxylase, hydroxylates GA7 to GA3, the final product of the GA-biosynthetic pathway. The chain is Cytochrome P450 monooygenase 1 from Gibberella fujikuroi (strain CBS 195.34 / IMI 58289 / NRRL A-6831) (Bakanae and foot rot disease fungus).